A 677-amino-acid polypeptide reads, in one-letter code: O-fucosyltransferase 27 (677 aa).

The helical; Signal-anchor for type II membrane protein transmembrane segment at 15–35 (WIGLLGLVLSAFSLLVHFLLA) threads the bilayer. N-linked (GlcNAc...) asparagine glycosylation is present at Asn-130. A disordered region spans residues 410–437 (PPSIEVETKHDSLKSTRQRPQPLPPPPA). N-linked (GlcNAc...) asparagine glycosylation is found at Asn-542 and Asn-592. Residues 619 to 677 (NAEKEEDLDEEDLSSSGLFFGHKESGGNNNGNNETVNSEANNKEEGQLEDQEELEGSER) are disordered. Positions 622 to 631 (KEEDLDEEDL) are enriched in acidic residues. Low complexity predominate over residues 644 to 658 (GGNNNGNNETVNSEA). The N-linked (GlcNAc...) asparagine glycan is linked to Asn-651. Positions 665–677 (QLEDQEELEGSER) are enriched in acidic residues.

It belongs to the glycosyltransferase GT106 family.

It is found in the membrane. The protein operates within glycan metabolism. The polypeptide is O-fucosyltransferase 27 (Arabidopsis thaliana (Mouse-ear cress)).